The following is a 243-amino-acid chain: tRNA (guanine-N(1)-)-methyltransferase (243 aa).

Residues Gly112 and 131–136 (LGDYVL) contribute to the S-adenosyl-L-methionine site.

It belongs to the RNA methyltransferase TrmD family. Homodimer.

It localises to the cytoplasm. It catalyses the reaction guanosine(37) in tRNA + S-adenosyl-L-methionine = N(1)-methylguanosine(37) in tRNA + S-adenosyl-L-homocysteine + H(+). Its function is as follows. Specifically methylates guanosine-37 in various tRNAs. This Leuconostoc mesenteroides subsp. mesenteroides (strain ATCC 8293 / DSM 20343 / BCRC 11652 / CCM 1803 / JCM 6124 / NCDO 523 / NBRC 100496 / NCIMB 8023 / NCTC 12954 / NRRL B-1118 / 37Y) protein is tRNA (guanine-N(1)-)-methyltransferase.